The following is a 514-amino-acid chain: 2,3-bisphosphoglycerate-independent phosphoglycerate mutase (514 aa).

Mn(2+)-binding residues include Asp14 and Ser64. Ser64 acts as the Phosphoserine intermediate in catalysis. Residues His125, 155–156 (RD), Arg187, Arg193, 263–266 (RADR), and Lys336 contribute to the substrate site. Mn(2+) contacts are provided by Asp403, His407, Asp444, His445, and His463.

The protein belongs to the BPG-independent phosphoglycerate mutase family. Monomer. The cofactor is Mn(2+).

It carries out the reaction (2R)-2-phosphoglycerate = (2R)-3-phosphoglycerate. It participates in carbohydrate degradation; glycolysis; pyruvate from D-glyceraldehyde 3-phosphate: step 3/5. Its function is as follows. Catalyzes the interconversion of 2-phosphoglycerate and 3-phosphoglycerate. This Shewanella sediminis (strain HAW-EB3) protein is 2,3-bisphosphoglycerate-independent phosphoglycerate mutase.